Reading from the N-terminus, the 286-residue chain is MREKTLRSEVLEEFATYLELEGKSKNTIRMYTYFLSKFLEEGYSPTARDALRFLAKLRAKGYSIRSINLVVQALKAYFKFEGLNEEAERLRNPKIPKTLPKSLTEEEVKKLIEVIPKDKIRDRLIVLLLYGTGLRVSELCNLKIEDINFEKGFLTVRGGKGGKDRTIPIPQPLLTEIKNYLRRRTDDSPYLFVESRRKNKEKLSPKTVWRILKEYGRKAGIKVTPHQLRHSFATHMLERGIDIRIIQELLGHASLSTTQIYTRVTAKHLKEAVERANLLENLIGGE.

Residues 5–82 (TLRSEVLEEF…ALKAYFKFEG (78 aa)) form the Core-binding (CB) domain. A Tyr recombinase domain is found at 98–274 (TLPKSLTEEE…TAKHLKEAVE (177 aa)). Catalysis depends on residues Arg-135, Lys-160, His-226, Arg-229, and His-252. The active-site O-(3'-phospho-DNA)-tyrosine intermediate is Tyr-261.

It belongs to the 'phage' integrase family. XerA subfamily.

It is found in the cytoplasm. Functionally, site-specific tyrosine recombinase, which acts by catalyzing the cutting and rejoining of the recombining DNA molecules. In Pyrococcus furiosus (strain ATCC 43587 / DSM 3638 / JCM 8422 / Vc1), this protein is Tyrosine recombinase XerA.